The chain runs to 875 residues: F-box only protein 41 (875 aa).

Disordered regions lie at residues 85–110 (ESTSFQGKEQAAGPSPAAPHLLHHHH), 165–194 (SSACSTPPPGPGPGPCPGPASASPASPSPA), and 347–542 (SSSC…PSRS). Over residues 170–182 (TPPPGPGPGPCPG) the composition is skewed to pro residues. Residues 183 to 194 (PASASPASPSPA) are compositionally biased toward low complexity. The stretch at 209–351 (ALEKLEVDRR…QLQVISSSCG (143 aa)) forms a coiled coil. The span at 347 to 356 (SSSCGSTPSA) shows a compositional bias: polar residues. The segment covering 359-368 (GRGGGGGGAG) has biased composition (gly residues). At Arg360 the chain carries Omega-N-methylarginine. The segment covering 395–416 (HGSSPSTGASSRVPAASQSSGC) has biased composition (polar residues). Phosphoserine is present on Ser478. Residue Thr479 is modified to Phosphothreonine. An F-box domain is found at 496–540 (SEAEGPLDAPRPGPAMAGPLSSCRLSARPEGGSGRGRRAERVSPS). A Phosphoserine modification is found at Ser762.

As to quaternary structure, directly interacts with SKP1 and CUL1.

Substrate-recognition component of the SCF (SKP1-CUL1-F-box protein)-type E3 ubiquitin ligase complex. This Homo sapiens (Human) protein is F-box only protein 41 (FBXO41).